Consider the following 288-residue polypeptide: Formamidopyrimidine-DNA glycosylase (288 aa).

The Schiff-base intermediate with DNA role is filled by Pro2. Glu3 acts as the Proton donor in catalysis. Lys59 (proton donor; for beta-elimination activity) is an active-site residue. His93, Arg112, and Lys168 together coordinate DNA. Residues 254–288 (NVYGRGGEPCKRCGAPIKRVVVGGRSTHYCATCQR) form an FPG-type zinc finger. The active-site Proton donor; for delta-elimination activity is Arg278.

The protein belongs to the FPG family. In terms of assembly, monomer. Zn(2+) serves as cofactor.

It catalyses the reaction Hydrolysis of DNA containing ring-opened 7-methylguanine residues, releasing 2,6-diamino-4-hydroxy-5-(N-methyl)formamidopyrimidine.. The enzyme catalyses 2'-deoxyribonucleotide-(2'-deoxyribose 5'-phosphate)-2'-deoxyribonucleotide-DNA = a 3'-end 2'-deoxyribonucleotide-(2,3-dehydro-2,3-deoxyribose 5'-phosphate)-DNA + a 5'-end 5'-phospho-2'-deoxyribonucleoside-DNA + H(+). Its function is as follows. Involved in base excision repair of DNA damaged by oxidation or by mutagenic agents. Acts as a DNA glycosylase that recognizes and removes damaged bases. Has a preference for oxidized purines, such as 7,8-dihydro-8-oxoguanine (8-oxoG). Has AP (apurinic/apyrimidinic) lyase activity and introduces nicks in the DNA strand. Cleaves the DNA backbone by beta-delta elimination to generate a single-strand break at the site of the removed base with both 3'- and 5'-phosphates. This is Formamidopyrimidine-DNA glycosylase from Corynebacterium jeikeium (strain K411).